The chain runs to 131 residues: Peptidyl-prolyl cis-trans isomerase NIMA-interacting 4 (131 aa).

Residues 1 to 25 are necessary for nuclear localization and DNA-binding; it reads MPPKGKSGSGKGGKGKAASGSESSE. Positions 1 to 37 are disordered; that stretch reads MPPKGKSGSGKGGKGKAASGSESSEKKAQGPKGGGNA. Positions 1 to 41 are necessary for association with the pre-rRNP complexes; that stretch reads MPPKGKSGSGKGGKGKAASGSESSEKKAQGPKGGGNAVKVR. Serine 19 is subject to Phosphoserine; by CK2. The PpiC domain maps to 35–129; it reads GNAVKVRHIL…FGYHIIMVEG (95 aa).

It belongs to the PpiC/parvulin rotamase family. PIN4 subfamily. As to quaternary structure, found in pre-ribosomal ribonucleoprotein (pre-rRNP) complexes. Post-translationally, phosphorylated. Phosphorylation occurs both in the nucleus and the cytoplasm. Phosphorylation at Ser-19 does not affect its PPIase activity but is required for nuclear localization, and the dephosphorylation is a prerequisite for the binding to DNA. The unphosphorylated form associates with the pre-rRNP complexes in the nucleus.

The protein localises to the nucleus. The protein resides in the nucleolus. It is found in the cytoplasm. It localises to the cytoskeleton. Its subcellular location is the spindle. The catalysed reaction is [protein]-peptidylproline (omega=180) = [protein]-peptidylproline (omega=0). Functionally, involved as a ribosomal RNA processing factor in ribosome biogenesis. Binds to tightly bent AT-rich stretches of double-stranded DNA. The chain is Peptidyl-prolyl cis-trans isomerase NIMA-interacting 4 (PIN4) from Bos taurus (Bovine).